The primary structure comprises 1185 residues: Ovostatin homolog 1 (1185 aa).

A signal peptide spans 1–21; that stretch reads MHVHVCVCLCVCIYTSSCVCA. Asn80, Asn155, Asn347, Asn452, and Asn725 each carry an N-linked (GlcNAc...) asparagine glycan.

It belongs to the protease inhibitor I39 (alpha-2-macroglobulin) family. Homotetramer.

It is found in the secreted. Its function is as follows. Is able to inhibit all four classes of proteinases by a unique 'trapping' mechanism. The polypeptide is Ovostatin homolog 1 (OVOS1) (Homo sapiens (Human)).